Reading from the N-terminus, the 139-residue chain is Actin-depolymerizing factor 1 (139 aa).

Residues alanine 5–leucine 139 form the ADF-H domain.

Belongs to the actin-binding proteins ADF family.

Functionally, actin-depolymerizing protein. Severs actin filaments (F-actin) and binds to actin monomers. This is Actin-depolymerizing factor 1 (ADF1) from Oryza sativa subsp. japonica (Rice).